The following is a 312-amino-acid chain: DNA-directed RNA polymerase subunit alpha (312 aa).

Positions 1 to 229 (MLQYQIDRIE…ELFQPLATVT (229 aa)) are alpha N-terminal domain (alpha-NTD). Residues 239-312 (EPTAEAQIPL…IQIPQSRTSA (74 aa)) are alpha C-terminal domain (alpha-CTD).

This sequence belongs to the RNA polymerase alpha chain family. In cyanobacteria the RNAP catalytic core is composed of 2 alpha, 1 beta, 1 beta', 1 gamma and 1 omega subunit. When a sigma factor is associated with the core the holoenzyme is formed, which can initiate transcription.

The catalysed reaction is RNA(n) + a ribonucleoside 5'-triphosphate = RNA(n+1) + diphosphate. Its function is as follows. DNA-dependent RNA polymerase catalyzes the transcription of DNA into RNA using the four ribonucleoside triphosphates as substrates. The sequence is that of DNA-directed RNA polymerase subunit alpha from Synechococcus sp. (strain WH7803).